The sequence spans 449 residues: Exodeoxyribonuclease 7 large subunit (449 aa).

Belongs to the XseA family. As to quaternary structure, heterooligomer composed of large and small subunits.

The protein resides in the cytoplasm. It carries out the reaction Exonucleolytic cleavage in either 5'- to 3'- or 3'- to 5'-direction to yield nucleoside 5'-phosphates.. Functionally, bidirectionally degrades single-stranded DNA into large acid-insoluble oligonucleotides, which are then degraded further into small acid-soluble oligonucleotides. This Salmonella paratyphi B (strain ATCC BAA-1250 / SPB7) protein is Exodeoxyribonuclease 7 large subunit.